Consider the following 116-residue polypeptide: Bifunctional protein GlmU (116 aa).

Residue K8 participates in acetyl-CoA binding. H20 (proton acceptor) is an active-site residue. Residues Y23, N34, 43–44, A80, and R97 contribute to the acetyl-CoA site; that span reads NY.

In the N-terminal section; belongs to the N-acetylglucosamine-1-phosphate uridyltransferase family. The protein in the C-terminal section; belongs to the transferase hexapeptide repeat family. Mg(2+) serves as cofactor.

The protein localises to the cytoplasm. It catalyses the reaction alpha-D-glucosamine 1-phosphate + acetyl-CoA = N-acetyl-alpha-D-glucosamine 1-phosphate + CoA + H(+). The catalysed reaction is N-acetyl-alpha-D-glucosamine 1-phosphate + UTP + H(+) = UDP-N-acetyl-alpha-D-glucosamine + diphosphate. Its pathway is nucleotide-sugar biosynthesis; UDP-N-acetyl-alpha-D-glucosamine biosynthesis; N-acetyl-alpha-D-glucosamine 1-phosphate from alpha-D-glucosamine 6-phosphate (route II): step 2/2. It functions in the pathway nucleotide-sugar biosynthesis; UDP-N-acetyl-alpha-D-glucosamine biosynthesis; UDP-N-acetyl-alpha-D-glucosamine from N-acetyl-alpha-D-glucosamine 1-phosphate: step 1/1. The protein operates within bacterial outer membrane biogenesis; LPS lipid A biosynthesis. Catalyzes the last two sequential reactions in the de novo biosynthetic pathway for UDP-N-acetylglucosamine (UDP-GlcNAc). The C-terminal domain catalyzes the transfer of acetyl group from acetyl coenzyme A to glucosamine-1-phosphate (GlcN-1-P) to produce N-acetylglucosamine-1-phosphate (GlcNAc-1-P), which is converted into UDP-GlcNAc by the transfer of uridine 5-monophosphate (from uridine 5-triphosphate), a reaction catalyzed by the N-terminal domain. This Bacillus caldolyticus protein is Bifunctional protein GlmU (glmU).